Consider the following 209-residue polypeptide: LexA repressor (209 aa).

A DNA-binding region (H-T-H motif) is located at residues 28-48 (RVELAKILGFRSANAAEEHLK). Residues serine 126 and lysine 163 each act as for autocatalytic cleavage activity in the active site.

Belongs to the peptidase S24 family. In terms of assembly, homodimer.

It catalyses the reaction Hydrolysis of Ala-|-Gly bond in repressor LexA.. Its function is as follows. Represses a number of genes involved in the response to DNA damage (SOS response), including recA and lexA. In the presence of single-stranded DNA, RecA interacts with LexA causing an autocatalytic cleavage which disrupts the DNA-binding part of LexA, leading to derepression of the SOS regulon and eventually DNA repair. The protein is LexA repressor of Psychromonas ingrahamii (strain DSM 17664 / CCUG 51855 / 37).